A 1262-amino-acid chain; its full sequence is Clustered mitochondria protein homolog (1262 aa).

The tract at residues 1 to 47 (MTSGSELKAEVDAPVVNGKDELVHEEDNNDSGHSSINTPDASEDKQT) is disordered. Polar residues predominate over residues 31–40 (SGHSSINTPD). A Clu domain is found at 335–580 (AIELIEPFRV…RSMPPDVHYL (246 aa)).

This sequence belongs to the CLU family.

It localises to the cytoplasm. Its function is as follows. mRNA-binding protein involved in proper cytoplasmic distribution of mitochondria. The polypeptide is Clustered mitochondria protein homolog (Caenorhabditis briggsae).